Here is a 235-residue protein sequence, read N- to C-terminus: Ribosomal RNA small subunit methyltransferase G (235 aa).

S-adenosyl-L-methionine is bound by residues Gly74, Phe79, 97 to 99 (EAT), 125 to 126 (AE), and Arg144.

Belongs to the methyltransferase superfamily. RNA methyltransferase RsmG family.

Its subcellular location is the cytoplasm. Specifically methylates the N7 position of a guanine in 16S rRNA. The sequence is that of Ribosomal RNA small subunit methyltransferase G from Dehalococcoides mccartyi (strain CBDB1).